The following is a 757-amino-acid chain: Xylosyl- and glucuronyltransferase LARGE1 (757 aa).

Topologically, residues 1–10 are cytoplasmic; sequence MLGMCRGRRK. Residues 11–31 traverse the membrane as a helical; Signal-anchor for type II membrane protein segment; sequence FVAASLALIFIPALTWLYLSS. Residues 32-757 lie on the Lumenal side of the membrane; the sequence is ANITVKPLPL…LKYMTVDNNS (726 aa). Residues 50-82 are a coiled coil; the sequence is AVVGAAAEHQSLELRLRDVEEHNNALRREISRT. Residues 76–127 are disordered; sequence RREISRTPRVPTHSSHPSSSRHGNQLHTHSTEEGTGDSEAKKGAAAGNSSDC. A compositionally biased stretch (low complexity) spans 82 to 97; sequence TPRVPTHSSHPSSSRH. N123 and N149 each carry an N-linked (GlcNAc...) asparagine glycan. Residues 139-414 are xylosyltransferase activity; sequence IHIAIVCAGY…FLEYDGNLLR (276 aa). The Mn(2+) site is built by D243 and D245. The N-linked (GlcNAc...) asparagine glycan is linked to N273. Positions 415 to 757 are glucuronyltransferase activity; it reads RELFGCPSET…LKYMTVDNNS (343 aa). Residues D564 and D566 each contribute to the Mn(2+) site. The N-linked (GlcNAc...) asparagine glycan is linked to N738.

This sequence in the C-terminal section; belongs to the glycosyltransferase 49 family. In the N-terminal section; belongs to the glycosyltransferase 8 family. The cofactor is Mn(2+).

It is found in the golgi apparatus membrane. It catalyses the reaction 3-O-[beta-D-GlcA-(1-&gt;3)-beta-D-Xyl-(1-&gt;4)-Rib-ol-P-Rib-ol-P-3-beta-D-GalNAc-(1-&gt;3)-beta-D-GlcNAc-(1-&gt;4)-(O-6-P-alpha-D-Man)]-Thr-[protein] + UDP-alpha-D-xylose = 3-O-[alpha-D-Xyl-(1-&gt;3)-beta-D-GlcA-(1-&gt;4)-beta-D-Xyl-(1-&gt;4)-Rib-ol-P-Rib-ol-P-3-beta-D-GalNAc-(1-&gt;3)-beta-D-GlcNAc-(1-&gt;4)-(O-6-P-alpha-D-Man)]-Thr-[protein] + UDP + H(+). It carries out the reaction 3-O-{(1-&gt;[3)-alpha-D-Xyl-(1-&gt;3)-beta-D-GlcA-(1-&gt;](n)-4)-beta-D-Xyl-(1-&gt;4)-Rib-ol-P-Rib-ol-P-3-beta-D-GalNAc-(1-&gt;3)-beta-D-GlcNAc-(1-&gt;4)-O-6-P-alpha-D-Man}-L-Thr-[protein] + UDP-alpha-D-glucuronate = 3-O-{beta-D-GlcA-(1-&gt;[3)-alpha-D-Xyl-(1-&gt;3)-beta-D-GlcA-(1-&gt;](n)-4)-beta-D-Xyl-(1-&gt;4)-Rib-ol-P-Rib-ol-P-3-beta-D-GalNAc-(1-&gt;3)-beta-D-GlcNAc-(1-&gt;4)-O-6-P-alpha-D-Man}-L-Thr-[protein] + UDP + H(+). The catalysed reaction is 3-O-{beta-D-GlcA-(1-&gt;[3)-alpha-D-Xyl-(1-&gt;3)-beta-D-GlcA-(1-&gt;](n)-4)-beta-D-Xyl-(1-&gt;4)-Rib-ol-P-Rib-ol-P-3-beta-D-GalNAc-(1-&gt;3)-beta-D-GlcNAc-(1-&gt;4)-O-6-P-alpha-D-Man}-L-Thr-[protein] + UDP-alpha-D-xylose = 3-O-{(1-&gt;[3)-alpha-D-Xyl-(1-&gt;3)-beta-D-GlcA-(1-&gt;](n+1)-4)-beta-D-Xyl-(1-&gt;4)-Rib-ol-P-Rib-ol-P-3-beta-D-GalNAc-(1-&gt;3)-beta-D-GlcNAc-(1-&gt;4)-O-6-P-alpha-D-Man}-L-Thr-[protein] + UDP + H(+). It participates in protein modification; protein glycosylation. Its function is as follows. Bifunctional glycosyltransferase with both alpha-1,3-xylosyltransferase and beta-1,3-glucuronyltransferase activities involved in the maturation of alpha-dystroglycan (DAG1) by glycosylation leading to DAG1 binding to laminin G-like domain-containing extracellular proteins with high affinity. Elongates the glucuronyl-beta-1,4-xylose-beta disaccharide primer structure initiated by B4GAT1 by adding repeating units [-3-Xylose-alpha-1,3-GlcA-beta-1-] to produce a heteropolysaccharide. Requires the phosphorylation of core M3 (O-mannosyl trisaccharide) by POMK to elongate the glucuronyl-beta-1,4-xylose-beta disaccharide primer. Plays a key role in skeletal muscle function and regeneration. In Danio rerio (Zebrafish), this protein is Xylosyl- and glucuronyltransferase LARGE1.